Reading from the N-terminus, the 482-residue chain is Putative metabolite transport protein YfiG (482 aa).

Residues 1-29 are Cytoplasmic-facing; sequence MSTKKKEAVIGKESLAHKGLLRTITLVST. Residues 30-50 form a helical membrane-spanning segment; that stretch reads FGGLLFGYDTGVINGALPFMA. Residues 51–59 are Extracellular-facing; sequence TAGQLNLTP. A helical membrane pass occupies residues 60 to 80; sequence VTEGLVASSLLLGAAFGAMFG. Residues 81 to 92 are Cytoplasmic-facing; that stretch reads GRLSDRHGRRKT. A helical transmembrane segment spans residues 93–113; the sequence is ILYLALLFIAATLGCTFSPNA. Over 114 to 120 the chain is Extracellular; that stretch reads SVMIAFR. The helical transmembrane segment at 121 to 141 threads the bilayer; that stretch reads FLLGLAVGCASVTVPTFLAEI. The Cytoplasmic portion of the chain corresponds to 142–155; the sequence is SPAERRGRIVTQNE. Residues 156–176 traverse the membrane as a helical segment; it reads LMIVIGQLLAYTFNAIIGSTM. Residues 177–184 are Extracellular-facing; the sequence is GESANVWR. The chain crosses the membrane as a helical span at residues 185–205; the sequence is YMLVIATLPAVVLWFGMLIVP. Topologically, residues 206 to 263 are cytoplasmic; it reads ESPRWLAAKGRMGDALRVLRQIREDSQAQQEIKEIKHAIEGTAKKAGFHDFQEPWIRR. A helical membrane pass occupies residues 264–284; it reads ILFIGIGIAIVQQITGVNSIM. Topologically, residues 285-301 are extracellular; sequence YYGTEILREAGFQTEAA. Residues 302–322 traverse the membrane as a helical segment; it reads LIGNIANGVISVIAVIFGIWL. The Cytoplasmic segment spans residues 323–331; that stretch reads LGKVRRRPM. The next 2 membrane-spanning stretches (helical) occupy residues 332–352 and 353–373; these read LIIG…LSIV and LEGT…FLAF. Residues 374–400 are Cytoplasmic-facing; that stretch reads QQTAISTVTWLMLSEIFPMHVRGLGMG. A helical transmembrane segment spans residues 401-421; that stretch reads ISTFCLWTANFLIGFTFPILL. Residues 422 to 423 lie on the Extracellular side of the membrane; the sequence is NH. The helical transmembrane segment at 424 to 444 threads the bilayer; that stretch reads IGMSATFFIFVAMNILAILFV. Topologically, residues 445 to 482 are cytoplasmic; the sequence is KKYVPETKGRSLEQLEHSFRQYGRRADQEIQNQTTHLS.

It belongs to the major facilitator superfamily. Sugar transporter (TC 2.A.1.1) family.

The protein localises to the cell membrane. This is Putative metabolite transport protein YfiG (yfiG) from Bacillus subtilis (strain 168).